Reading from the N-terminus, the 621-residue chain is MSVEVDKHRNTLQYHKKNPYSPLFSPISTYRCYPRVLNNPSESRRSASFSGIYKKRTNTSRFNYLNDRRVLSMEESMKDGSDRASKAGFIGGIRETLWNSGKYLWHTFVKNEPRNFDGSEVEASGNSDVESRSSGSRSSDVPYGLRENYSSDTRKHKFDTSTWALPNKRRRIESEGVGTPSTSPISSLASQKSNCDSDNSITFSRDPFGWNKWKTSAIGSNSENNTSDQKNSYDRRQYGTAFIRKKKVAKQNINNTKLVSRAQSEEVTYLRQIFNGEYKVPKILKEERERQLKLMDMDKEKDTGLKKSIIDLTEKIKTILIENNKNRLQTRNENDDDLVFVKEKKISSLERKHKDYLNQKLKFDRSILEFEKDFKRYNEILNERKKIQEDLKKKKEQLAKKKLVPELNEKDDDQVQKALASRENTQLMNRDNIEITVRDFKTLAPRRWLNDTIIEFFMKYIEKSTPNTVAFNSFFYTNLSERGYQGVRRWMKRKKTQIDKLDKIFTPINLNQSHWALGIIDLKKKTIGYVDSLSNGPNAMSFAILTDLQKYVMEESKHTIGEDFDLIHLDCPQQPNGYDCGIYVCMNTLYGSADAPLDFDYKDAIRMRRFIAHLILTDALK.

An N-acetylserine modification is found at serine 2. Residues serine 21 and serine 25 each carry the phosphoserine modification. 2 disordered regions span residues 116–150 (FDGS…ENYS) and 169–196 (RRRI…SNCD). Positions 124–141 (SGNSDVESRSSGSRSSDV) are enriched in low complexity. Threonine 179 is modified (phosphothreonine). A compositionally biased stretch (polar residues) spans 179-196 (TPSTSPISSLASQKSNCD). Serine 264 carries the phosphoserine modification. Residues 432–621 (NIEITVRDFK…AHLILTDALK (190 aa)) form a protease region. Active-site residues include histidine 514, aspartate 531, and cysteine 580.

This sequence belongs to the peptidase C48 family.

The catalysed reaction is Hydrolysis of the alpha-linked peptide bond in the sequence Gly-Gly-|-Ala-Thr-Tyr at the C-terminal end of the small ubiquitin-like modifier (SUMO) propeptide, Smt3, leading to the mature form of the protein. A second reaction involves the cleavage of an epsilon-linked peptide bond between the C-terminal glycine of the mature SUMO and the lysine epsilon-amino group of the target protein.. Functionally, protease that catalyzes two essential functions in the SUMO pathway: processing of full-length SMT3 to its mature form and deconjugation of SMT3 from targeted proteins. Has an essential role in the G2/M phase of the cell cycle. The polypeptide is Ubiquitin-like-specific protease 1 (ULP1) (Saccharomyces cerevisiae (strain ATCC 204508 / S288c) (Baker's yeast)).